Here is a 180-residue protein sequence, read N- to C-terminus: Large ribosomal subunit protein uL16 (180 aa).

This sequence belongs to the universal ribosomal protein uL16 family.

The sequence is that of Large ribosomal subunit protein uL16 from Hyperthermus butylicus (strain DSM 5456 / JCM 9403 / PLM1-5).